Consider the following 443-residue polypeptide: Amino-acid acetyltransferase (443 aa).

Residues 296–443 form the N-acetyltransferase domain; sequence EQIRRATIND…KSKVLMADLG (148 aa).

The protein belongs to the acetyltransferase family. ArgA subfamily. As to quaternary structure, homohexamer.

It is found in the cytoplasm. It carries out the reaction L-glutamate + acetyl-CoA = N-acetyl-L-glutamate + CoA + H(+). The protein operates within amino-acid biosynthesis; L-arginine biosynthesis; N(2)-acetyl-L-ornithine from L-glutamate: step 1/4. Feedback inhibition by L-arginine. The protein is Amino-acid acetyltransferase (argA) of Shigella flexneri.